We begin with the raw amino-acid sequence, 598 residues long: Beta-galactosidase (598 aa).

The first 21 residues, 1–21, serve as a signal peptide directing secretion; it reads MLRTTLAPLVLALALALPAAA. Glutamate 184 (proton donor) is an active-site residue. Catalysis depends on glutamate 260, which acts as the Nucleophile.

The protein belongs to the glycosyl hydrolase 35 family.

It carries out the reaction Hydrolysis of terminal non-reducing beta-D-galactose residues in beta-D-galactosides.. In terms of biological role, preferentially hydrolyzes beta(1-&gt;3) galactosyl linkages over beta(1-&gt;4) linkages. In Xanthomonas manihotis, this protein is Beta-galactosidase (bga).